Reading from the N-terminus, the 204-residue chain is High frequency lysogenization protein HflD homolog (204 aa).

Belongs to the HflD family.

It is found in the cytoplasm. The protein resides in the cell inner membrane. This chain is High frequency lysogenization protein HflD homolog, found in Shewanella amazonensis (strain ATCC BAA-1098 / SB2B).